A 155-amino-acid chain; its full sequence is 6,7-dimethyl-8-ribityllumazine synthase (155 aa).

Residues Phe24, 58 to 60 (AFE), and 82 to 84 (VII) each bind 5-amino-6-(D-ribitylamino)uracil. (2S)-2-hydroxy-3-oxobutyl phosphate is bound at residue 87 to 88 (ST). His90 (proton donor) is an active-site residue. 5-amino-6-(D-ribitylamino)uracil is bound at residue Phe115. Arg129 contacts (2S)-2-hydroxy-3-oxobutyl phosphate.

This sequence belongs to the DMRL synthase family.

The enzyme catalyses (2S)-2-hydroxy-3-oxobutyl phosphate + 5-amino-6-(D-ribitylamino)uracil = 6,7-dimethyl-8-(1-D-ribityl)lumazine + phosphate + 2 H2O + H(+). It functions in the pathway cofactor biosynthesis; riboflavin biosynthesis; riboflavin from 2-hydroxy-3-oxobutyl phosphate and 5-amino-6-(D-ribitylamino)uracil: step 1/2. In terms of biological role, catalyzes the formation of 6,7-dimethyl-8-ribityllumazine by condensation of 5-amino-6-(D-ribitylamino)uracil with 3,4-dihydroxy-2-butanone 4-phosphate. This is the penultimate step in the biosynthesis of riboflavin. This is 6,7-dimethyl-8-ribityllumazine synthase from Chlorobium limicola (strain DSM 245 / NBRC 103803 / 6330).